A 693-amino-acid chain; its full sequence is CREB-regulated transcription coactivator 2 (693 aa).

A compositionally biased stretch (polar residues) spans 1 to 20 (MATSGANGPGSATASASNPR). The disordered stretch occupies residues 1 to 30 (MATSGANGPGSATASASNPRKFSEKIALQK). N-acetylalanine is present on Ala-2. Position 51 is an asymmetric dimethylarginine; by PRMT6 (Arg-51). A phosphoserine mark is found at Ser-70, Ser-86, and Ser-90. 3 positions are modified to asymmetric dimethylarginine; by PRMT6: Arg-99, Arg-120, and Arg-123. Ser-136 is modified (phosphoserine). An asymmetric dimethylarginine; by PRMT6 mark is found at Arg-161 and Arg-168. At Thr-169 the chain carries Phosphothreonine. Ser-171 carries the post-translational modification Phosphoserine; by AMPK, MARK2, SIK1 and SIK2. Position 192 is a phosphothreonine (Thr-192). Lys-234 participates in a covalent cross-link: Glycyl lysine isopeptide (Lys-Gly) (interchain with G-Cter in SUMO2). The Nuclear export signal signature appears at 271–287 (TGGSLPDLTNLHFPPPL). The residue at position 274 (Ser-274) is a Phosphoserine; by MARK2. Disordered regions lie at residues 282 to 306 (HFPPPLPTPLDPEETAYPSLSGGNS) and 328 to 554 (GYDA…MSDF). A phosphoserine mark is found at Ser-306, Ser-368, Ser-393, Ser-433, and Ser-456. Composition is skewed to low complexity over residues 331–378 (APGL…SSLA) and 386–415 (SLGHPSLSAPALSSSSSSSSTSSPVLGAPS). Positions 447-468 (SQQQLPKQFSPTMSPTLSSITQ) are enriched in polar residues. Tyr-488 carries the phosphotyrosine modification. Residues Ser-489, Ser-490, and Ser-492 each carry the phosphoserine modification. A compositionally biased stretch (polar residues) spans 498 to 507 (QPHTPKSLQQ). Phosphothreonine is present on Thr-501. The segment covering 509–529 (GLPSQSCSVQSSGGQPPGRQS) has biased composition (low complexity). Ser-613, Ser-623, and Ser-624 each carry phosphoserine.

The protein belongs to the TORC family. Binds, as a tetramer, through its N-terminal region, with the bZIP domain of CREB1. 'Arg-314' in the bZIP domain of CREB1 is essential for this interaction. Interaction, via its C-terminal, with TAF4, enhances recruitment of TAF4 to CREB1. Interacts with SIK2. Interacts with 14-3-3 proteins, YWHAB and YWHAG. Interacts (probably when phosphorylated at Ser-171) with YWHAE. Interacts with calmodulin-dependent catalytic subunit PPP3CA/calcineurin A. Interaction with COP1 mediates nuclear export and degradation of CRTC2. In terms of assembly, (Microbial infection) Interaction with the human T-cell leukemia virus type 1 (HTLV-1) Tax protein is essential for optimal transcription activation by Tax. Post-translationally, phosphorylation/dephosphorylation states of Ser-171 are required for regulating transduction of CREB activity. CRTCs/TORCs are inactive when phosphorylated, and active when dephosphorylated at this site. This primary site of phosphorylation, is regulated by cAMP and calcium levels and is dependent on the phosphorylation of SIKs (SIK1 and SIK2) by LKB1. Following adenylyl cyclase activation, dephosphorylated at Ser-171 by PPP3CA/calcineurin A resulting in CRTC2 dissociation from 14-3-3 proteins and PPP3CA. Both insulin and AMPK increase this phosphorylation of CRTC2 while glucagon suppresses it. Phosphorylation at Ser-274 by MARK2 is induced under low glucose conditions and dephosphorylated in response to glucose influx. Phosphorylation at Ser-274 promotes interaction with 14-3-3 proteins and translocation to the cytoplasm. In terms of processing, asymmetric dimethylation of arginine resisues by PRMT6 enhances the association of CRTC2 with CREB on the promoters of gluconeogenic genes. In terms of tissue distribution, most abundantly expressed in the thymus. Present in both B and T-lymphocytes. Highly expressed in HEK293T cells and in insulinomas. High levels also in spleen, ovary, muscle and lung, with highest levels in muscle. Lower levels found in brain, colon, heart, kidney, prostate, small intestine and stomach. Weak expression in liver and pancreas.

The protein resides in the cytoplasm. Its subcellular location is the nucleus. Transcriptional coactivator for CREB1 which activates transcription through both consensus and variant cAMP response element (CRE) sites. Acts as a coactivator, in the SIK/TORC signaling pathway, being active when dephosphorylated and acts independently of CREB1 'Ser-133' phosphorylation. Enhances the interaction of CREB1 with TAF4. Regulates gluconeogenesis as a component of the LKB1/AMPK/TORC2 signaling pathway. Regulates the expression of specific genes such as the steroidogenic gene, StAR. Potent coactivator of PPARGC1A and inducer of mitochondrial biogenesis in muscle cells. Also coactivator for TAX activation of the human T-cell leukemia virus type 1 (HTLV-1) long terminal repeats (LTR). This Homo sapiens (Human) protein is CREB-regulated transcription coactivator 2 (CRTC2).